Reading from the N-terminus, the 419-residue chain is Serine--tRNA ligase (419 aa).

226-228 (TSE) serves as a coordination point for L-serine. Residues 257–259 (RRE) and V273 contribute to the ATP site. E280 is a binding site for L-serine. 344–347 (ELTS) provides a ligand contact to ATP. T379 contacts L-serine.

It belongs to the class-II aminoacyl-tRNA synthetase family. Type-1 seryl-tRNA synthetase subfamily. Homodimer. The tRNA molecule binds across the dimer.

The protein localises to the cytoplasm. It catalyses the reaction tRNA(Ser) + L-serine + ATP = L-seryl-tRNA(Ser) + AMP + diphosphate + H(+). The catalysed reaction is tRNA(Sec) + L-serine + ATP = L-seryl-tRNA(Sec) + AMP + diphosphate + H(+). The protein operates within aminoacyl-tRNA biosynthesis; selenocysteinyl-tRNA(Sec) biosynthesis; L-seryl-tRNA(Sec) from L-serine and tRNA(Sec): step 1/1. Functionally, catalyzes the attachment of serine to tRNA(Ser). Is also able to aminoacylate tRNA(Sec) with serine, to form the misacylated tRNA L-seryl-tRNA(Sec), which will be further converted into selenocysteinyl-tRNA(Sec). This is Serine--tRNA ligase from Mycobacterium marinum (strain ATCC BAA-535 / M).